The following is a 331-amino-acid chain: 3'-5' exonuclease (331 aa).

The disordered stretch occupies residues 27-92 (ERVKQTNAAK…EDGPASPEKE (66 aa)). Over residues 31 to 43 (QTNAAKKQIATNN) the composition is skewed to polar residues. A compositionally biased stretch (basic and acidic residues) spans 47–67 (KNQDTPEMIKDKENAESENPP). Ser-80 and Ser-88 each carry phosphoserine. One can recognise a 3'-5' exonuclease domain in the interval 118-290 (SADEVMQWVE…IGQVIYREIE (173 aa)). Mg(2+) contacts are provided by Asp-140, Glu-142, and Asp-278.

This sequence belongs to the WRNexo family.

It localises to the nucleus. Functionally, has exonuclease activity on both single-stranded and duplex templates bearing overhangs, but not blunt ended duplex DNA, and cleaves in a 3'-5' direction. Essential for the formation of DNA replication focal centers. Has an important role in maintaining genome stability. The polypeptide is 3'-5' exonuclease (Drosophila grimshawi (Hawaiian fruit fly)).